A 185-amino-acid chain; its full sequence is Adenylyl-sulfate kinase (185 aa).

Position 13–20 (13–20) interacts with ATP; the sequence is GLSGAGKT. Ser-87 (phosphoserine intermediate) is an active-site residue.

Belongs to the APS kinase family.

It catalyses the reaction adenosine 5'-phosphosulfate + ATP = 3'-phosphoadenylyl sulfate + ADP + H(+). Its pathway is sulfur metabolism; hydrogen sulfide biosynthesis; sulfite from sulfate: step 2/3. Functionally, catalyzes the synthesis of activated sulfate. This Halothermothrix orenii (strain H 168 / OCM 544 / DSM 9562) protein is Adenylyl-sulfate kinase.